The primary structure comprises 216 residues: Protein Syd (216 aa).

It belongs to the Syd family.

It is found in the cell inner membrane. In terms of biological role, interacts with the SecY protein in vivo. May bind preferentially to an uncomplexed state of SecY, thus functioning either as a chelating agent for excess SecY in the cell or as a regulatory factor that negatively controls the translocase function. This is Protein Syd from Shewanella baltica (strain OS155 / ATCC BAA-1091).